A 357-amino-acid chain; its full sequence is Histidinol-phosphate aminotransferase 2 (357 aa).

Lys216 is subject to N6-(pyridoxal phosphate)lysine.

It belongs to the class-II pyridoxal-phosphate-dependent aminotransferase family. Histidinol-phosphate aminotransferase subfamily. Homodimer. Requires pyridoxal 5'-phosphate as cofactor.

It carries out the reaction L-histidinol phosphate + 2-oxoglutarate = 3-(imidazol-4-yl)-2-oxopropyl phosphate + L-glutamate. It functions in the pathway amino-acid biosynthesis; L-histidine biosynthesis; L-histidine from 5-phospho-alpha-D-ribose 1-diphosphate: step 7/9. This is Histidinol-phosphate aminotransferase 2 from Idiomarina loihiensis (strain ATCC BAA-735 / DSM 15497 / L2-TR).